We begin with the raw amino-acid sequence, 348 residues long: Histidinol-phosphate aminotransferase (348 aa).

At lysine 210 the chain carries N6-(pyridoxal phosphate)lysine.

This sequence belongs to the class-II pyridoxal-phosphate-dependent aminotransferase family. Histidinol-phosphate aminotransferase subfamily. In terms of assembly, homodimer. Requires pyridoxal 5'-phosphate as cofactor.

It catalyses the reaction L-histidinol phosphate + 2-oxoglutarate = 3-(imidazol-4-yl)-2-oxopropyl phosphate + L-glutamate. It functions in the pathway amino-acid biosynthesis; L-histidine biosynthesis; L-histidine from 5-phospho-alpha-D-ribose 1-diphosphate: step 7/9. This is Histidinol-phosphate aminotransferase from Cytophaga hutchinsonii (strain ATCC 33406 / DSM 1761 / CIP 103989 / NBRC 15051 / NCIMB 9469 / D465).